The primary structure comprises 440 residues: Discs overgrown protein kinase (440 aa).

Positions 9 to 277 constitute a Protein kinase domain; that stretch reads YRLGRKIGSG…HLRKLFRNLF (269 aa). ATP is bound by residues 15-23 and Lys38; that span reads IGSGSFGDI. The Proton acceptor role is filled by Asp128. The interval 221–224 is nuclear localization signal; essential for interaction with Bdbt and important for nuclear localization; the sequence is KRQK. Phosphoserine is present on residues Ser333 and Ser334. A disordered region spans residues 376-440; the sequence is SQLIGGNGLN…GGGGGVGNAK (65 aa). Over residues 413 to 440 the composition is skewed to gly residues; that stretch reads QGGGGGGGGVGVGGMPSGGGGGGVGNAK.

It belongs to the protein kinase superfamily. CK1 Ser/Thr protein kinase family. Casein kinase I subfamily. In terms of assembly, forms a complex with per. Interacts with Dlish. Interacts (via nuclear localization signal) with Bdbt. Detected in the head (at protein level). Expressed in photoreceptor cells of the eyes as well as in the region situated between the optic lobe and the central brain.

It is found in the nucleus. Its subcellular location is the cytoplasm. It localises to the cytosol. It catalyses the reaction L-seryl-[protein] + ATP = O-phospho-L-seryl-[protein] + ADP + H(+). The enzyme catalyses L-threonyl-[protein] + ATP = O-phospho-L-threonyl-[protein] + ADP + H(+). Its function is as follows. Serine/threonine-protein kinase which is involved in the circadian rhythm pathway, viability and planar cell polarity. In the circadian rhythm pathway, phosphorylates the clock gene period (per) and targets it for degradation in the absence of timeless (tim), thus contributing to production of the circadian oscillations of the clock genes. Together with CkIalpha, regulates processing of ci by phosphorylating it, which promotes its binding to slmb, the F-box recognition component of the SCF(slmb) E3 ubiquitin-protein ligase. Involved in the inhibition of apoptosis during cell proliferation and growth arrest in imaginal disks. Also functions in planar cell polarity. This Drosophila melanogaster (Fruit fly) protein is Discs overgrown protein kinase (dco).